A 162-amino-acid polypeptide reads, in one-letter code: UPF0260 protein Caul_3920 (162 aa).

Belongs to the UPF0260 family.

This chain is UPF0260 protein Caul_3920, found in Caulobacter sp. (strain K31).